The chain runs to 425 residues: Kynureninase (425 aa).

Pyridoxal 5'-phosphate contacts are provided by residues Leu-105, Thr-106, 133–136 (FPSD), Asp-218, His-221, and Tyr-243. Lys-244 carries the post-translational modification N6-(pyridoxal phosphate)lysine. Pyridoxal 5'-phosphate is bound by residues Trp-274 and Asn-302.

It belongs to the kynureninase family. In terms of assembly, homodimer. It depends on pyridoxal 5'-phosphate as a cofactor.

The enzyme catalyses L-kynurenine + H2O = anthranilate + L-alanine + H(+). It carries out the reaction 3-hydroxy-L-kynurenine + H2O = 3-hydroxyanthranilate + L-alanine + H(+). Its pathway is amino-acid degradation; L-kynurenine degradation; L-alanine and anthranilate from L-kynurenine: step 1/1. It functions in the pathway cofactor biosynthesis; NAD(+) biosynthesis; quinolinate from L-kynurenine: step 2/3. In terms of biological role, catalyzes the cleavage of L-kynurenine (L-Kyn) and L-3-hydroxykynurenine (L-3OHKyn) into anthranilic acid (AA) and 3-hydroxyanthranilic acid (3-OHAA), respectively. In Christiangramia forsetii (strain DSM 17595 / CGMCC 1.15422 / KT0803) (Gramella forsetii), this protein is Kynureninase.